The following is a 349-amino-acid chain: Twinfilin-2 (349 aa).

ADF-H domains lie at 4–139 (QTGI…KHVS) and 177–313 (GLAF…DEVH). Residues 324-349 (AKPKGPVGKRGQKRLIKGPGENGEDS) form a disordered region.

The protein belongs to the actin-binding proteins ADF family. Twinfilin subfamily. Interacts with G-actin; ADP-actin form and capping protein (CP).

It is found in the cytoplasm. It localises to the cytoskeleton. The protein localises to the perinuclear region. Functionally, actin-binding protein involved in motile and morphological processes. Inhibits actin polymerization, likely by sequestering G-actin. The protein is Twinfilin-2 (TWF2) of Gallus gallus (Chicken).